The primary structure comprises 144 residues: Small ribosomal subunit protein eS19 (144 aa).

It belongs to the eukaryotic ribosomal protein eS19 family.

The sequence is that of Small ribosomal subunit protein eS19 (RPS19) from Argopecten irradians (Bay scallop).